Here is a 214-residue protein sequence, read N- to C-terminus: Pyridoxine/pyridoxamine 5'-phosphate oxidase (214 aa).

Substrate is bound by residues 9 to 12 and lysine 67; that span reads RKSY. Residues 62-67, 77-78, arginine 83, lysine 84, and glutamine 106 contribute to the FMN site; these read RIVLLK and YT. Residues tyrosine 124, arginine 128, and serine 132 each coordinate substrate. FMN-binding positions include 141–142 and tryptophan 186; that span reads QS. 192-194 contacts substrate; that stretch reads RLH. Residue arginine 196 coordinates FMN.

The protein belongs to the pyridoxamine 5'-phosphate oxidase family. As to quaternary structure, homodimer. Requires FMN as cofactor.

The enzyme catalyses pyridoxamine 5'-phosphate + O2 + H2O = pyridoxal 5'-phosphate + H2O2 + NH4(+). It catalyses the reaction pyridoxine 5'-phosphate + O2 = pyridoxal 5'-phosphate + H2O2. It participates in cofactor metabolism; pyridoxal 5'-phosphate salvage; pyridoxal 5'-phosphate from pyridoxamine 5'-phosphate: step 1/1. Its pathway is cofactor metabolism; pyridoxal 5'-phosphate salvage; pyridoxal 5'-phosphate from pyridoxine 5'-phosphate: step 1/1. Catalyzes the oxidation of either pyridoxine 5'-phosphate (PNP) or pyridoxamine 5'-phosphate (PMP) into pyridoxal 5'-phosphate (PLP). The polypeptide is Pyridoxine/pyridoxamine 5'-phosphate oxidase (Leptospira interrogans serogroup Icterohaemorrhagiae serovar copenhageni (strain Fiocruz L1-130)).